Consider the following 341-residue polypeptide: Heat-inducible transcription repressor HrcA (341 aa).

The protein belongs to the HrcA family.

Functionally, negative regulator of class I heat shock genes (grpE-dnaK-dnaJ and groELS operons). Prevents heat-shock induction of these operons. This chain is Heat-inducible transcription repressor HrcA, found in Mycobacteroides abscessus (strain ATCC 19977 / DSM 44196 / CCUG 20993 / CIP 104536 / JCM 13569 / NCTC 13031 / TMC 1543 / L948) (Mycobacterium abscessus).